The chain runs to 158 residues: Endoribonuclease YbeY (158 aa).

Positions 122, 126, and 132 each coordinate Zn(2+).

It belongs to the endoribonuclease YbeY family. Requires Zn(2+) as cofactor.

The protein resides in the cytoplasm. In terms of biological role, single strand-specific metallo-endoribonuclease involved in late-stage 70S ribosome quality control and in maturation of the 3' terminus of the 16S rRNA. The polypeptide is Endoribonuclease YbeY (Bacillus licheniformis (strain ATCC 14580 / DSM 13 / JCM 2505 / CCUG 7422 / NBRC 12200 / NCIMB 9375 / NCTC 10341 / NRRL NRS-1264 / Gibson 46)).